A 398-amino-acid polypeptide reads, in one-letter code: uncharacterized protein (398 aa).

The N-terminal stretch at 1–22 (MKLKFYKLPLITTAFSFVFLTA) is a signal peptide. Residue Cys-23 is the site of N-palmitoyl cysteine attachment. Cys-23 carries S-diacylglycerol cysteine lipidation.

Its subcellular location is the cell membrane. This is an uncharacterized protein from Mycoplasma genitalium (strain ATCC 33530 / DSM 19775 / NCTC 10195 / G37) (Mycoplasmoides genitalium).